Here is a 471-residue protein sequence, read N- to C-terminus: Variant surface glycoprotein WRATAT A (471 aa).

Residues 1 to 18 (MSVLFLLLAITRTASVKA) form the signal peptide. Residues asparagine 61 and asparagine 133 are each glycosylated (N-linked (GlcNAc...) asparagine). The tract at residues 373–457 (QEQTLATTGT…ANTTGSSNSF (85 aa)) is disordered. Residues 379-392 (TTGTKSSSPQSTQQ) are compositionally biased toward low complexity. 2 disulfides stabilise this stretch: cysteine 401/cysteine 414 and cysteine 410/cysteine 427. A compositionally biased stretch (basic and acidic residues) spans 401–447 (CNDKAKETECNSPCKWDKEEKDEKKRCKLSEEGKQAEKENQEGKDGK). The span at 448 to 457 (ANTTGSSNSF) shows a compositional bias: polar residues. N-linked (GlcNAc...) asparagine glycosylation occurs at asparagine 449. Serine 454 carries GPI-anchor amidated serine lipidation. The propeptide at 455–471 (NSFVIKTSPLLLAVLLL) is removed in mature form.

Its subcellular location is the cell membrane. Its function is as follows. VSG forms a coat on the surface of the parasite. The trypanosome evades the immune response of the host by expressing a series of antigenically distinct VSGs from an estimated 1000 VSG genes. The chain is Variant surface glycoprotein WRATAT A from Trypanosoma brucei rhodesiense.